A 257-amino-acid chain; its full sequence is Enterotoxin type A (257 aa).

The first 27 residues, 1 to 27, serve as a signal peptide directing secretion; the sequence is MKKTAFILLLFIALTWTTSPLVNGSEK. C120 and C130 are oxidised to a cystine. Zn(2+) contacts are provided by H211, H249, and D251.

This sequence belongs to the staphylococcal/streptococcal toxin family. As to quaternary structure, monomer. Interacts with MHC class II molecules alpha/HLA-DRB1 and beta/HLA-DRA chains. The interaction with MHC-II molecules occurs at both zinc-dependent and zinc-independent sites. Interacts with T-cell receptor beta variable 7-9/TRBV7-9. It depends on Zn(2+) as a cofactor.

It localises to the secreted. Functionally, staphylococcal enterotoxin that activates the host immune system by binding as unprocessed molecules to major histocompatibility (MHC) complex class II and T-cell receptor (TCR) molecules. In turn, waves of cellular activation, cytokine production, and migration into the lung tissue and airways occur via alphabeta T-cells. Also causes the intoxication staphylococcal food poisoning syndrome. The illness is characterized by high fever, hypotension, diarrhea, shock, and in some cases death. The polypeptide is Enterotoxin type A (sea) (Staphylococcus aureus (strain Newman)).